A 408-amino-acid polypeptide reads, in one-letter code: Peptidase T (408 aa).

Residue His-78 participates in Zn(2+) binding. The active site involves Asp-80. A Zn(2+)-binding site is contributed by Asp-141. Glu-175 acts as the Proton acceptor in catalysis. Zn(2+)-binding residues include Glu-176, Asp-198, and His-380.

The protein belongs to the peptidase M20B family. Zn(2+) serves as cofactor.

The protein resides in the cytoplasm. The enzyme catalyses Release of the N-terminal residue from a tripeptide.. Functionally, cleaves the N-terminal amino acid of tripeptides. In Halothermothrix orenii (strain H 168 / OCM 544 / DSM 9562), this protein is Peptidase T.